We begin with the raw amino-acid sequence, 428 residues long: Glutamate-1-semialdehyde 2,1-aminomutase (428 aa).

The residue at position 267 (K267) is an N6-(pyridoxal phosphate)lysine.

The protein belongs to the class-III pyridoxal-phosphate-dependent aminotransferase family. HemL subfamily. In terms of assembly, homodimer. It depends on pyridoxal 5'-phosphate as a cofactor.

The protein resides in the cytoplasm. It carries out the reaction (S)-4-amino-5-oxopentanoate = 5-aminolevulinate. It functions in the pathway porphyrin-containing compound metabolism; protoporphyrin-IX biosynthesis; 5-aminolevulinate from L-glutamyl-tRNA(Glu): step 2/2. This chain is Glutamate-1-semialdehyde 2,1-aminomutase, found in Pelobacter propionicus (strain DSM 2379 / NBRC 103807 / OttBd1).